A 150-amino-acid polypeptide reads, in one-letter code: Endoribonuclease YbeY (150 aa).

3 residues coordinate Zn(2+): His-113, His-117, and His-123.

Belongs to the endoribonuclease YbeY family. Zn(2+) is required as a cofactor.

It localises to the cytoplasm. In terms of biological role, single strand-specific metallo-endoribonuclease involved in late-stage 70S ribosome quality control and in maturation of the 3' terminus of the 16S rRNA. This chain is Endoribonuclease YbeY, found in Syntrophotalea carbinolica (strain DSM 2380 / NBRC 103641 / GraBd1) (Pelobacter carbinolicus).